The chain runs to 1921 residues: Endoribonuclease Dicer (1921 aa).

Positions 51–227 constitute a Helicase ATP-binding domain; the sequence is LLEAALDHNT…ELEEKIKKLE (177 aa). 64–71 is a binding site for ATP; sequence LNTGSGKT. The DECH box motif lies at 175–178; it reads DECH. The tract at residues 409–433 is disordered; it reads YVSWSDSEDDDEDEEIEEKEKPETN. The segment covering 414–425 has biased composition (acidic residues); it reads DSEDDDEDEEIE. The region spanning 433 to 602 is the Helicase C-terminal domain; the sequence is NFPSPFTNIL…SVDTSETETE (170 aa). Residues 630–722 enclose the Dicer dsRNA-binding fold domain; it reads AIGHINRYCA…MPVGKETVKY (93 aa). A disordered region spans residues 727 to 746; the sequence is DLHDEEETSVPGRPGSTKRR. The PAZ domain maps to 895 to 1042; it reads KFMEDIEKSE…LVPELCAIHP (148 aa). Residues 1270–1289 are disordered; sequence NLSKDKVDSEKNTSSGYSSK. RNase III domains are found at residues 1277–1404 and 1665–1823; these read DSEK…EETT and FENF…MDSG. Glu1317, Asp1396, Glu1399, and Glu1704 together coordinate Mg(2+). The tract at residues 1782-1801 is disordered; that stretch reads QGMDSELRRSEEDEEKEEDI. Mg(2+)-binding residues include Asp1809 and Glu1812. In terms of domain architecture, DRBM spans 1848 to 1913; sequence VPRSPVRELL…ARRALRSLKA (66 aa).

The protein belongs to the helicase family. Dicer subfamily. As to quaternary structure, component of the RISC loading complex (RLC), or micro-RNA (miRNA) loading complex (miRLC), which is composed of DICER1, AGO2 and TARBP2; DICER1 and TARBP2 are required to process precursor miRNAs (pre-miRNAs) to mature miRNAs and then load them onto AGO2. Note that the trimeric RLC/miRLC is also referred to as RISC. Mg(2+) serves as cofactor. Mn(2+) is required as a cofactor.

The protein resides in the cytoplasm. It carries out the reaction Endonucleolytic cleavage to 5'-phosphomonoester.. Double-stranded RNA (dsRNA) endoribonuclease playing a central role in short dsRNA-mediated post-transcriptional gene silencing. Cleaves naturally occurring long dsRNAs and short hairpin pre-microRNAs (miRNA) into fragments of twenty-one to twenty-three nucleotides with 3' overhang of two nucleotides, producing respectively short interfering RNAs (siRNA) and mature microRNAs. SiRNAs and miRNAs serve as guide to direct the RNA-induced silencing complex (RISC) to complementary RNAs to degrade them or prevent their translation. Gene silencing mediated by siRNAs, also called RNA interference, controls the elimination of transcripts from mobile and repetitive DNA elements of the genome but also the degradation of exogenous RNA of viral origin for instance. The miRNA pathway on the other side is a mean to specifically regulate the expression of target genes. The sequence is that of Endoribonuclease Dicer (DICER1) from Gallus gallus (Chicken).